Here is a 394-residue protein sequence, read N- to C-terminus: Elongation factor Tu (394 aa).

A tr-type G domain is found at 10 to 204 (KPHVNIGTIG…AVDSYIPQPV (195 aa)). Residues 19-26 (GHVDHGKT) are G1. 19-26 (GHVDHGKT) lines the GTP pocket. Threonine 26 contacts Mg(2+). A G2 region spans residues 60–64 (GITIS). The G3 stretch occupies residues 81–84 (DCPG). GTP is bound by residues 81–85 (DCPGH) and 136–139 (NKVD). A G4 region spans residues 136 to 139 (NKVD). Residues 174–176 (SAL) are G5.

The protein belongs to the TRAFAC class translation factor GTPase superfamily. Classic translation factor GTPase family. EF-Tu/EF-1A subfamily. In terms of assembly, monomer.

Its subcellular location is the cytoplasm. It carries out the reaction GTP + H2O = GDP + phosphate + H(+). In terms of biological role, GTP hydrolase that promotes the GTP-dependent binding of aminoacyl-tRNA to the A-site of ribosomes during protein biosynthesis. This chain is Elongation factor Tu, found in Rickettsia rhipicephali.